The sequence spans 72 residues: Neuropeptide SIFamide (72 aa).

A signal peptide spans 1 to 26; the sequence is MALRFTLTLLLVTILVAAILLGSSEA. Residue Asn34 is glycosylated (N-linked (GlcNAc...) asparagine). Phe38 is subject to Phenylalanine amide. A propeptide spanning residues 42–72 is cleaved from the precursor; it reads NSLDYDSAKMSAVCEVAMEACPMWFPQNDSK.

Belongs to the FARP (FMRFamide related peptide) family. As to expression, strongly expressed in two pairs of neurons in the pars intercerebralis (at protein level).

Its subcellular location is the secreted. Functionally, ligand for the neuropeptide SIFamide receptor. Modulates sexual behavior by negatively regulating female receptivity to male courtship and by playing a role in male sex discrimination. Also involved in promoting sleep. This chain is Neuropeptide SIFamide, found in Drosophila melanogaster (Fruit fly).